A 549-amino-acid polypeptide reads, in one-letter code: Probable protein kinase UbiB (549 aa).

The Protein kinase domain occupies 123 to 501; it reads DFNETPLASA…QQQAHKSNYL (379 aa). Residues 129-137 and lysine 152 contribute to the ATP site; that span reads LASASISQV. Residue aspartate 287 is the Proton acceptor of the active site. Helical transmembrane passes span 498–518 and 520–540; these read SNYLLITSAILLICGTLLFNQ and ATLWSPYVCLISGAALWIIGW.

Belongs to the ABC1 family. UbiB subfamily.

The protein localises to the cell inner membrane. It participates in cofactor biosynthesis; ubiquinone biosynthesis [regulation]. Functionally, is probably a protein kinase regulator of UbiI activity which is involved in aerobic coenzyme Q (ubiquinone) biosynthesis. This is Probable protein kinase UbiB from Shewanella sp. (strain MR-7).